Reading from the N-terminus, the 166-residue chain is Ribosome maturation factor RimM (166 aa).

The region spanning 92 to 164 is the PRC barrel domain; sequence EGVYYDFQLI…KIIIDPIPGL (73 aa).

The protein belongs to the RimM family. In terms of assembly, binds ribosomal protein uS19.

It localises to the cytoplasm. Functionally, an accessory protein needed during the final step in the assembly of 30S ribosomal subunit, possibly for assembly of the head region. Essential for efficient processing of 16S rRNA. May be needed both before and after RbfA during the maturation of 16S rRNA. It has affinity for free ribosomal 30S subunits but not for 70S ribosomes. This Dehalococcoides mccartyi (strain CBDB1) protein is Ribosome maturation factor RimM.